Here is a 938-residue protein sequence, read N- to C-terminus: LPS-assembly protein LptD (938 aa).

Residues 1-33 (MAVKHPAFRKKFPLLVTGSLLALQPAFSLQSFA) form the signal peptide. Residues 52–96 (KTATSALPPRPQHSRSAVSTTSGSATATATKQEPAPVLVTESKGR) are disordered. The span at 65–81 (SRSAVSTTSGSATATAT) shows a compositional bias: low complexity.

The protein belongs to the LptD family. In terms of assembly, component of the lipopolysaccharide transport and assembly complex. Interacts with LptE and LptA.

Its subcellular location is the cell outer membrane. Functionally, together with LptE, is involved in the assembly of lipopolysaccharide (LPS) at the surface of the outer membrane. The sequence is that of LPS-assembly protein LptD from Ectopseudomonas mendocina (strain ymp) (Pseudomonas mendocina).